A 54-amino-acid chain; its full sequence is Conotoxin vc5a (54 aa).

Residues 1 to 14 (VILLLITSTPSVDA) form the signal peptide. Positions 15–42 (RLKAKDNMPLASFHDNAKRTLQTRLINT) are excised as a propeptide. P49 carries the 4-hydroxyproline modification. An Isoleucine amide modification is found at I53.

The protein belongs to the conotoxin T superfamily. In terms of processing, contains 2 disulfide bonds that can be either 'C1-C3, C2-C4' or 'C1-C4, C2-C3', since these disulfide connectivities have been observed for conotoxins with cysteine framework V (for examples, see AC P0DQQ7 and AC P81755). Expressed by the venom duct.

It is found in the secreted. The polypeptide is Conotoxin vc5a (Conus victoriae (Queen Victoria cone)).